The primary structure comprises 594 residues: Pre-mRNA-processing protein 45 (594 aa).

Disordered regions lie at residues 36-63 (TTEY…RKGW), 223-254 (PPRF…TAQD), 370-426 (ETGI…SEMR), 498-523 (AGSS…SKDR), and 566-594 (EQFM…ARDE). Composition is skewed to pro residues over residues 44-53 (APLPATPGPQ) and 235-244 (PAEPPPPVLQ). Acidic residues predominate over residues 383-397 (GSEEESDEEEEDEEA). Basic and acidic residues-rich tracts occupy residues 398-417 (IRER…KEMR), 513-523 (EGIKEEMSKDR), and 578-594 (RTAE…ARDE).

The protein belongs to the SNW family. Associated with the spliceosome.

It is found in the nucleus. Involved in pre-mRNA splicing. This Cryptococcus neoformans var. neoformans serotype D (strain B-3501A) (Filobasidiella neoformans) protein is Pre-mRNA-processing protein 45 (PRP45).